The chain runs to 597 residues: Myrcene synthase, chloroplastic (597 aa).

A chloroplast-targeting transit peptide spans 1–56; sequence MALKLLTSLPMYNFSRVPVSSKDPILLVTSRTRNGYLARPVQCMVANKVSTSPDIL. (2E)-geranyl diphosphate contacts are provided by Arg-310, Asp-347, Asp-351, Arg-488, and Asp-491. Mg(2+) is bound by residues Asp-347 and Asp-351. Positions 347–351 match the DDXXD motif motif; that stretch reads DDVYD. Mg(2+)-binding residues include Asp-491, Thr-495, and Glu-499.

It belongs to the terpene synthase family. Tpsb subfamily. Mg(2+) serves as cofactor. Requires Mn(2+) as cofactor.

The protein localises to the plastid. The protein resides in the chloroplast. The enzyme catalyses (2E)-geranyl diphosphate = beta-myrcene + diphosphate. Its function is as follows. Involved in monoterpene (C10) biosynthesis. The major product is myrcene followed by minor amounts (1.2%) of the cyclic monoterpene limonene. This is Myrcene synthase, chloroplastic from Quercus ilex (Holly oak).